Reading from the N-terminus, the 361-residue chain is 3-dehydroquinate synthase (361 aa).

NAD(+)-binding positions include 106–110 (GVVGD), 130–131 (TT), Lys-143, and Lys-152. Residues Glu-185, His-248, and His-265 each coordinate Zn(2+).

The protein belongs to the sugar phosphate cyclases superfamily. Dehydroquinate synthase family. Requires NAD(+) as cofactor. The cofactor is Co(2+). Zn(2+) serves as cofactor.

Its subcellular location is the cytoplasm. It catalyses the reaction 7-phospho-2-dehydro-3-deoxy-D-arabino-heptonate = 3-dehydroquinate + phosphate. It participates in metabolic intermediate biosynthesis; chorismate biosynthesis; chorismate from D-erythrose 4-phosphate and phosphoenolpyruvate: step 2/7. Functionally, catalyzes the conversion of 3-deoxy-D-arabino-heptulosonate 7-phosphate (DAHP) to dehydroquinate (DHQ). The sequence is that of 3-dehydroquinate synthase from Leptospira interrogans serogroup Icterohaemorrhagiae serovar copenhageni (strain Fiocruz L1-130).